Consider the following 167-residue polypeptide: NADH-quinone oxidoreductase subunit B (167 aa).

4 residues coordinate [4Fe-4S] cluster: cysteine 48, cysteine 49, cysteine 113, and cysteine 143.

This sequence belongs to the complex I 20 kDa subunit family. NDH-1 is composed of 14 different subunits. Subunits NuoB, C, D, E, F, and G constitute the peripheral sector of the complex. [4Fe-4S] cluster is required as a cofactor.

It localises to the cell membrane. It carries out the reaction a quinone + NADH + 5 H(+)(in) = a quinol + NAD(+) + 4 H(+)(out). In terms of biological role, NDH-1 shuttles electrons from NADH, via FMN and iron-sulfur (Fe-S) centers, to quinones in the respiratory chain. Couples the redox reaction to proton translocation (for every two electrons transferred, four hydrogen ions are translocated across the cytoplasmic membrane), and thus conserves the redox energy in a proton gradient. The protein is NADH-quinone oxidoreductase subunit B of Wolbachia pipientis subsp. Culex pipiens (strain wPip).